Consider the following 382-residue polypeptide: Acetylxylan esterase A (382 aa).

Positions 1–21 (MKSLSFSFLVTLFLYLTLSSA) are cleaved as a signal peptide. The propeptide occupies 22-31 (RTLGKDVNKR). Positions 35–307 (GSLQQVTGFG…GAKDMEWFGF (273 aa)) are catalytic. N-linked (GlcNAc...) asparagine glycosylation is present at Asn46. The active-site Charge relay system is the Ser152. N-linked (GlcNAc...) asparagine glycosylation is present at Asn194. Residues 308-345 (SGSGSSSTTTASATKTSTTSTTSTKTTSSTSSTTTSST) are ser/Thr-rich linker. Positions 313-345 (SSTTTASATKTSTTSTTSTKTTSSTSSTTTSST) are enriched in low complexity. A disordered region spans residues 313–346 (SSTTTASATKTSTTSTTSTKTTSSTSSTTTSSTG). Positions 346-382 (GVAAHWGQCGGSGWTGPTVCESGYTCTYSNAWYSQCL) constitute a CBM1 domain.

This sequence belongs to the carbohydrate esterase 1 (CE1) family. AxeA subfamily. Monomer. Glycosylated.

Its subcellular location is the secreted. It carries out the reaction Deacetylation of xylans and xylo-oligosaccharides.. It functions in the pathway glycan degradation; xylan degradation. Its activity is regulated as follows. Inactivated by phenylmethylsulfonylfluorid (PMSF), a specific inhibitor of serine esterases. Its function is as follows. Acetylxylan esterase involved in the hydrolysis of xylan, a major structural heterogeneous polysaccharide found in plant biomass representing the second most abundant polysaccharide in the biosphere, after cellulose. Degrades acetylated xylans by cleaving acetyl side groups from the hetero-xylan backbone. This Talaromyces purpureogenus (Soft rot fungus) protein is Acetylxylan esterase A (axeA).